Here is a 213-residue protein sequence, read N- to C-terminus: mRNA-decapping protein D9 (213 aa).

Residues 30 to 209 form the Nudix hydrolase domain; the sequence is KDTHVFAACI…EYLSYIYNML (180 aa). Residues 111–132 carry the Nudix box motif; it reads GKLDKKESIKDCLRRELKEESD. Mg(2+) is bound at residue Glu117. The Nucleophile role is filled by Glu126. Residues Glu130 and Asp151 each contribute to the Mg(2+) site.

Belongs to the Nudix hydrolase family. Mg(2+) is required as a cofactor. It depends on Mn(2+) as a cofactor.

Decapping enzyme required for the removal of the 5'-end m7GpppN cap tethered to viral and host mRNAs to allow their decay in cells. May therefore accelerate viral and cellular mRNA turnover to eliminate competing host mRNAs and allow stage-specific synthesis of viral proteins. Acceleration of the turnover of cellular transcripts may even promote the shutoff of host protein synthesis. Does not cleave unmethylated RNAs or RNAs shorter than 24 nucleotides. This is mRNA-decapping protein D9 from Homo sapiens (Human).